Here is a 219-residue protein sequence, read N- to C-terminus: Dual specificity phosphatase 29 (219 aa).

Residues 53–201 (HVNEVWPKLY…LRELDRQLVQ (149 aa)) enclose the Tyrosine-protein phosphatase domain. Residue 145–152 (HCVMGRSR) coordinates substrate. Residue Cys-146 is the Phosphocysteine intermediate of the active site.

It belongs to the protein-tyrosine phosphatase family. Non-receptor class dual specificity subfamily. In terms of assembly, homodimer. Interacts with PRKAA2.

The protein resides in the cytoplasm. Its subcellular location is the nucleus. It carries out the reaction O-phospho-L-tyrosyl-[protein] + H2O = L-tyrosyl-[protein] + phosphate. It catalyses the reaction O-phospho-L-seryl-[protein] + H2O = L-seryl-[protein] + phosphate. The enzyme catalyses O-phospho-L-threonyl-[protein] + H2O = L-threonyl-[protein] + phosphate. In terms of biological role, dual specificity phosphatase able to dephosphorylate phosphotyrosine, phosphoserine and phosphothreonine residues within the same substrate, with a preference for phosphotyrosine as a substrate. Involved in the modulation of intracellular signaling cascades. May regulate glucose metabolism by activating, AMPK, an energy sensor protein kinase. Affects MAP kinase signaling though modulation of the ERK1/2 cascade in skeletal muscle promoting muscle cell differentiation, development and atrophy. The chain is Dual specificity phosphatase 29 (DUSP29) from Bos taurus (Bovine).